A 381-amino-acid chain; its full sequence is Homoserine O-succinyltransferase (381 aa).

Residues 45-360 (NAVLVCHALN…PHGHDAFLLD (316 aa)) form the AB hydrolase-1 domain. Ser-151 acts as the Nucleophile in catalysis. Arg-221 provides a ligand contact to substrate. Residues Asp-321 and His-354 contribute to the active site. Asp-355 lines the substrate pocket.

This sequence belongs to the AB hydrolase superfamily. MetX family. Homodimer.

It localises to the cytoplasm. The catalysed reaction is L-homoserine + succinyl-CoA = O-succinyl-L-homoserine + CoA. Its pathway is amino-acid biosynthesis; L-methionine biosynthesis via de novo pathway; O-succinyl-L-homoserine from L-homoserine: step 1/1. Its function is as follows. Transfers a succinyl group from succinyl-CoA to L-homoserine, forming succinyl-L-homoserine. The sequence is that of Homoserine O-succinyltransferase from Burkholderia cenocepacia (strain HI2424).